The following is a 774-amino-acid chain: Transcription factor MBS1 (774 aa).

Residues 37 to 143 form the HTH APSES-type domain; it reads EITFYDSGVP…YVPTSVSPPP (107 aa). A DNA-binding region (H-T-H motif) is located at residues 68–89; sequence ATQILKVAGFDKPQRTRVLERE. 2 disordered regions span residues 135–180 and 209–229; these read VPTS…SAAA and RVSL…VASV. Residues 155–165 are compositionally biased toward basic and acidic residues; that stretch reads ARRDKEKETGR. The span at 166–176 shows a compositional bias: polar residues; the sequence is TKATPSRTGPT. ANK repeat units follow at residues 348–377 and 467–496; these read DGHT…SIFA and EGET…NPKI. The disordered stretch occupies residues 752–774; sequence EEENDNQVYNTSAGESGPSSWVQ. The span at 757 to 774 shows a compositional bias: polar residues; sequence NQVYNTSAGESGPSSWVQ.

Its subcellular location is the nucleus. In terms of biological role, transcription factor that positively regulates ergosterol biosynthesis and thereby affects polyene and azole drug susceptibility. Plays a role in maintenance of membrane stability and osmotic stress response. Involved in genotoxic and oxidative stress responses. Also promotes production of melanin and capsule and thereby is required for full virulence. The sequence is that of Transcription factor MBS1 from Cryptococcus neoformans var. grubii serotype A (strain H99 / ATCC 208821 / CBS 10515 / FGSC 9487) (Filobasidiella neoformans var. grubii).